Here is a 769-residue protein sequence, read N- to C-terminus: Integrin beta-2 (769 aa).

The first 22 residues, 1–22 (MLRQRPQLLLLAGLLALQSVLS), serve as a signal peptide directing secretion. Gln-23 is modified (pyrrolidone carboxylic acid). At 23–700 (QECTNYKVST…DMLECVKGPN (678 aa)) the chain is on the extracellular side. One can recognise a PSI domain in the interval 24–74 (ECTNYKVSTCRDCIESGPGCAWCQKLNFTGQGEPDSIRCDTRAELLSKGCP). Disulfide bonds link Cys-25–Cys-43, Cys-33–Cys-447, Cys-36–Cys-62, Cys-46–Cys-73, Cys-191–Cys-198, Cys-246–Cys-286, Cys-386–Cys-400, Cys-420–Cys-445, Cys-449–Cys-467, Cys-459–Cys-470, Cys-472–Cys-481, Cys-483–Cys-514, Cys-497–Cys-512, Cys-506–Cys-517, Cys-519–Cys-534, Cys-536–Cys-559, Cys-541–Cys-557, Cys-549–Cys-562, Cys-564–Cys-573, Cys-575–Cys-598, Cys-582–Cys-596, Cys-590–Cys-601, Cys-603–Cys-612, Cys-615–Cys-618, Cys-622–Cys-662, Cys-628–Cys-647, Cys-631–Cys-643, and Cys-670–Cys-695. 2 N-linked (GlcNAc...) asparagine glycosylation sites follow: Asn-50 and Asn-116. A VWFA domain is found at 124–363 (GYPIDLYYLM…ELIKNAYNKL (240 aa)). Positions 136 and 138 each coordinate Mg(2+). 4 residues coordinate Ca(2+): Ser-138, Asp-141, Asp-142, and Asp-173. Positions 229, 231, 233, and 234 each coordinate Ca(2+). Glu-234 contacts Mg(2+). A glycan (N-linked (GlcNAc...) asparagine) is linked at Asn-254. Ca(2+) contacts are provided by Asp-264 and Glu-347. The Cell attachment site signature appears at 397-399 (RGD). I-EGF domains lie at 449 to 482 (CRDASRDGSICGGRGSMECGVCRCDAGYIGKNCE), 483 to 535 (CQTQ…QFCE), 536 to 574 (CDNVNCERYDGQVCGGEKRGLCFCGTCRCDEQYEGSACQ), and 575 to 613 (CLKSTQGCLNLDGVECSGRGRCRCNVCQCDPGYQPPLCS). Asn-501 is a glycosylation site (N-linked (GlcNAc...) asparagine). Residue Asn-642 is glycosylated (N-linked (GlcNAc...) asparagine). Residues 701–723 (IAAIVGGTVGGVVLVGILLLVIW) form a helical membrane-spanning segment. The Cytoplasmic portion of the chain corresponds to 724-769 (KALTHLSDLREYHRFEKEKLKSQWNNDNPLFKSATTTVMNPKFAES). 2 positions are modified to phosphoserine: Ser-745 and Ser-756. Thr-758 and Thr-760 each carry phosphothreonine.

The protein belongs to the integrin beta chain family. Heterodimer of an alpha and a beta subunit. The ITGB2 beta subunit associates with the ITGAL, ITGAM, ITGAX or ITGAD alpha subunits. Found in a complex with CD177 and ITGAM/CD11b. Interacts with FGR. Interacts with COPS5 and RANBP9. Interacts with FLNA (via filamin repeats 4, 9, 12, 17, 19, 21, and 23). Interacts with THBD. In terms of processing, both Ser-745 and Ser-756 become phosphorylated when T-cells are exposed to phorbol esters. Phosphorylation on Thr-758 (but not on Ser-756) allows interaction with 14-3-3 proteins.

Its subcellular location is the cell membrane. It is found in the membrane raft. In terms of biological role, integrin ITGAL/ITGB2 is a receptor for ICAM1, ICAM2, ICAM3 and ICAM4. Integrin ITGAL/ITGB2 is also a receptor for the secreted form of ubiquitin-like protein ISG15; the interaction is mediated by ITGAL. Integrins ITGAM/ITGB2 and ITGAX/ITGB2 are receptors for the iC3b fragment of the third complement component and for fibrinogen. Integrin ITGAX/ITGB2 recognizes the sequence G-P-R in fibrinogen alpha-chain. Integrin ITGAM/ITGB2 recognizes P1 and P2 peptides of fibrinogen gamma chain. Integrin ITGAM/ITGB2 is also a receptor for factor X. Integrin ITGAD/ITGB2 is a receptor for ICAM3 and VCAM1. Contributes to natural killer cell cytotoxicity. Involved in leukocyte adhesion and transmigration of leukocytes including T-cells and neutrophils. Triggers neutrophil transmigration during lung injury through PTK2B/PYK2-mediated activation. Integrin ITGAL/ITGB2 in association with ICAM3, contributes to apoptotic neutrophil phagocytosis by macrophages. The chain is Integrin beta-2 (ITGB2) from Bos taurus (Bovine).